We begin with the raw amino-acid sequence, 301 residues long: MLPSIAKHAALHQVNPLKKHGQNFIFDSSLCDKIVRASNLAENSRVLEIGPGTGGLTRSILQKNPESLTVIETDARCLPLLNEIKEYYPNLNIIKQDALKINLTDLSYDIVNSVGFAYKKREVKPITNRRANDIGESKSIDYKVTIISNLPYHIGTELVIRWLKEARLITSMTLMLQKEVVERICAIPSTKAYGRLSVICQLIAKVEKCFDVAPTAFYPPPKVYSAIVKLIPLENPPSIALINKVEQITKLAFAGRRKMIKSSLKNLVPNIYEVLTQLKINDNYRAENLAPQDYLRIAEIL.

Residues Asn23, Ile25, Gly50, Glu72, Asp97, and Asn149 each contribute to the S-adenosyl-L-methionine site.

This sequence belongs to the class I-like SAM-binding methyltransferase superfamily. rRNA adenine N(6)-methyltransferase family. RsmA subfamily.

The protein localises to the cytoplasm. It carries out the reaction adenosine(1518)/adenosine(1519) in 16S rRNA + 4 S-adenosyl-L-methionine = N(6)-dimethyladenosine(1518)/N(6)-dimethyladenosine(1519) in 16S rRNA + 4 S-adenosyl-L-homocysteine + 4 H(+). Its function is as follows. Specifically dimethylates two adjacent adenosines (A1518 and A1519) in the loop of a conserved hairpin near the 3'-end of 16S rRNA in the 30S particle. May play a critical role in biogenesis of 30S subunits. This Rickettsia conorii (strain ATCC VR-613 / Malish 7) protein is Ribosomal RNA small subunit methyltransferase A.